A 191-amino-acid chain; its full sequence is Potassium-transporting ATPase KdpC subunit (191 aa).

Residues 11–31 (LFVLLTAVTGVVYPLAVTGIA) traverse the membrane as a helical segment.

The protein belongs to the KdpC family. In terms of assembly, the system is composed of three essential subunits: KdpA, KdpB and KdpC.

The protein resides in the cell inner membrane. Its function is as follows. Part of the high-affinity ATP-driven potassium transport (or Kdp) system, which catalyzes the hydrolysis of ATP coupled with the electrogenic transport of potassium into the cytoplasm. This subunit acts as a catalytic chaperone that increases the ATP-binding affinity of the ATP-hydrolyzing subunit KdpB by the formation of a transient KdpB/KdpC/ATP ternary complex. The sequence is that of Potassium-transporting ATPase KdpC subunit from Dechloromonas aromatica (strain RCB).